Consider the following 356-residue polypeptide: 3-isopropylmalate dehydrogenase (356 aa).

Residues arginine 91, arginine 101, arginine 129, and aspartate 223 each coordinate substrate. Mg(2+) is bound by residues aspartate 223, aspartate 247, and aspartate 251. Position 281-293 (glycine 281–asparagine 293) interacts with NAD(+).

This sequence belongs to the isocitrate and isopropylmalate dehydrogenases family. LeuB type 1 subfamily. In terms of assembly, homodimer. Mg(2+) is required as a cofactor. The cofactor is Mn(2+).

The protein resides in the cytoplasm. It catalyses the reaction (2R,3S)-3-isopropylmalate + NAD(+) = 4-methyl-2-oxopentanoate + CO2 + NADH. It functions in the pathway amino-acid biosynthesis; L-leucine biosynthesis; L-leucine from 3-methyl-2-oxobutanoate: step 3/4. In terms of biological role, catalyzes the oxidation of 3-carboxy-2-hydroxy-4-methylpentanoate (3-isopropylmalate) to 3-carboxy-4-methyl-2-oxopentanoate. The product decarboxylates to 4-methyl-2 oxopentanoate. This is 3-isopropylmalate dehydrogenase from Ralstonia nicotianae (strain ATCC BAA-1114 / GMI1000) (Ralstonia solanacearum).